A 206-amino-acid polypeptide reads, in one-letter code: Cytochrome b-245 chaperone 1 homolog (206 aa).

Residues 21 to 43 form a helical membrane-spanning segment; the sequence is GIRSWSILVGIASVGLAAAYYSS. Positions 172-206 are disordered; it reads ADDDYPDDDDGIEDLGLGDSSDSQDDPDGDDDEEH. Composition is skewed to acidic residues over residues 174–184 and 193–206; these read DDYPDDDDGIE and DSQDDPDGDDDEEH.

Belongs to the CYBC1 family.

It localises to the endoplasmic reticulum membrane. Its function is as follows. Functions as a chaperone necessary for a stable expression of the CYBA and CYBB subunits of the cytochrome b-245 heterodimer. This Danio rerio (Zebrafish) protein is Cytochrome b-245 chaperone 1 homolog.